The primary structure comprises 660 residues: DNA mismatch repair protein MutL (660 aa).

Residues 341–355 show a composition bias toward polar residues; the sequence is SFQSDGAPPTQQLSS. Disordered stretches follow at residues 341-362 and 378-398; these read SFQSDGAPPTQQLSSDVREKAE and ALSPTKQELPKSPERSERVER. The span at 385–398 shows a compositional bias: basic and acidic residues; sequence ELPKSPERSERVER.

Belongs to the DNA mismatch repair MutL/HexB family.

In terms of biological role, this protein is involved in the repair of mismatches in DNA. It is required for dam-dependent methyl-directed DNA mismatch repair. May act as a 'molecular matchmaker', a protein that promotes the formation of a stable complex between two or more DNA-binding proteins in an ATP-dependent manner without itself being part of a final effector complex. This chain is DNA mismatch repair protein MutL, found in Heliobacterium modesticaldum (strain ATCC 51547 / Ice1).